Reading from the N-terminus, the 338-residue chain is Nucleoid-associated protein HI_0839 (338 aa).

It belongs to the YejK family.

It is found in the cytoplasm. The protein localises to the nucleoid. The protein is Nucleoid-associated protein HI_0839 of Haemophilus influenzae (strain ATCC 51907 / DSM 11121 / KW20 / Rd).